A 159-amino-acid polypeptide reads, in one-letter code: Transcription elongation factor GreA (159 aa).

This sequence belongs to the GreA/GreB family.

Necessary for efficient RNA polymerase transcription elongation past template-encoded arresting sites. The arresting sites in DNA have the property of trapping a certain fraction of elongating RNA polymerases that pass through, resulting in locked ternary complexes. Cleavage of the nascent transcript by cleavage factors such as GreA or GreB allows the resumption of elongation from the new 3'terminus. GreA releases sequences of 2 to 3 nucleotides. The chain is Transcription elongation factor GreA from Orientia tsutsugamushi (strain Boryong) (Rickettsia tsutsugamushi).